Reading from the N-terminus, the 257-residue chain is Imidazole glycerol phosphate synthase subunit hisF1 (257 aa).

Catalysis depends on residues Asp11 and Asp130.

This sequence belongs to the HisA/HisF family. Heterodimer of HisH and HisF.

The protein resides in the cytoplasm. It catalyses the reaction 5-[(5-phospho-1-deoxy-D-ribulos-1-ylimino)methylamino]-1-(5-phospho-beta-D-ribosyl)imidazole-4-carboxamide + L-glutamine = D-erythro-1-(imidazol-4-yl)glycerol 3-phosphate + 5-amino-1-(5-phospho-beta-D-ribosyl)imidazole-4-carboxamide + L-glutamate + H(+). It functions in the pathway amino-acid biosynthesis; L-histidine biosynthesis; L-histidine from 5-phospho-alpha-D-ribose 1-diphosphate: step 5/9. In terms of biological role, IGPS catalyzes the conversion of PRFAR and glutamine to IGP, AICAR and glutamate. The HisF subunit catalyzes the cyclization activity that produces IGP and AICAR from PRFAR using the ammonia provided by the HisH subunit. The polypeptide is Imidazole glycerol phosphate synthase subunit hisF1 (hisF1) (Vibrio vulnificus (strain YJ016)).